A 232-amino-acid polypeptide reads, in one-letter code: Octanoyltransferase (232 aa).

Positions 43–231 (DQTPNYFLFV…HFTQLFDCTV (189 aa)) constitute a BPL/LPL catalytic domain. Substrate is bound by residues 88 to 95 (RGGDITYH), 160 to 162 (ALG), and 173 to 175 (GFA). Residue C191 is the Acyl-thioester intermediate of the active site.

This sequence belongs to the LipB family.

It is found in the cytoplasm. The enzyme catalyses octanoyl-[ACP] + L-lysyl-[protein] = N(6)-octanoyl-L-lysyl-[protein] + holo-[ACP] + H(+). It participates in protein modification; protein lipoylation via endogenous pathway; protein N(6)-(lipoyl)lysine from octanoyl-[acyl-carrier-protein]: step 1/2. Its function is as follows. Catalyzes the transfer of endogenously produced octanoic acid from octanoyl-acyl-carrier-protein onto the lipoyl domains of lipoate-dependent enzymes. Lipoyl-ACP can also act as a substrate although octanoyl-ACP is likely to be the physiological substrate. This chain is Octanoyltransferase, found in Flavobacterium psychrophilum (strain ATCC 49511 / DSM 21280 / CIP 103535 / JIP02/86).